The chain runs to 85 residues: UPF0298 protein SUB0431 (85 aa).

Belongs to the UPF0298 family.

It localises to the cytoplasm. The protein is UPF0298 protein SUB0431 of Streptococcus uberis (strain ATCC BAA-854 / 0140J).